We begin with the raw amino-acid sequence, 271 residues long: Troponin T, fast skeletal muscle (271 aa).

Acidic residues predominate over residues 1–21 (MSDEEVEHVEEEYEEEEEAQE). Residues 1–74 (MSDEEVEHVE…EKVDFDDIQK (74 aa)) form a disordered region. S2 is subject to N-acetylserine. Residue S2 is modified to Phosphoserine. Basic and acidic residues-rich tracts occupy residues 31-53 (PEVH…EKPR) and 62-74 (PEGE…DIQK). At S90 the chain carries Phosphoserine. Positions 113-155 (RAERAEQQRIRAEKERERQNRLAEEKARREEEDAKRRAEDDLK) are enriched in basic and acidic residues. Positions 113–194 (RAERAEQQRI…REMKKKVLAE (82 aa)) are disordered. Residues S161, S168, and S169 each carry the phosphoserine modification. Positions 183–194 (TAREMKKKVLAE) are enriched in basic and acidic residues. Phosphoserine is present on S205. Phosphotyrosine is present on Y221. The segment at 248-271 (IDQAQKHSKKAGTAPKGKVGGRWK) is disordered.

Belongs to the troponin T family.

Functionally, troponin T is the tropomyosin-binding subunit of troponin, the thin filament regulatory complex which confers calcium-sensitivity to striated muscle actomyosin ATPase activity. The sequence is that of Troponin T, fast skeletal muscle (Tnnt3) from Bos taurus (Bovine).